Here is a 127-residue protein sequence, read N- to C-terminus: Glycine cleavage system H protein (127 aa).

Positions 24–105 (TALVGITDFA…YNDGWLVKMK (82 aa)) constitute a Lipoyl-binding domain. Lys-65 is modified (N6-lipoyllysine).

This sequence belongs to the GcvH family. As to quaternary structure, the glycine cleavage system is composed of four proteins: P, T, L and H. It depends on (R)-lipoate as a cofactor.

Functionally, the glycine cleavage system catalyzes the degradation of glycine. The H protein shuttles the methylamine group of glycine from the P protein to the T protein. The chain is Glycine cleavage system H protein from Pelodictyon phaeoclathratiforme (strain DSM 5477 / BU-1).